The sequence spans 477 residues: tRNA-2-methylthio-N(6)-dimethylallyladenosine synthase (477 aa).

Positions 3–120 constitute an MTTase N-terminal domain; the sequence is KKLHIKTWGC…LPAMIKQVQE (118 aa). Positions 12, 49, 83, 157, 161, and 164 each coordinate [4Fe-4S] cluster. Positions 143–375 constitute a Radical SAM core domain; the sequence is RAEGATAFVS…QHVINNQSMQ (233 aa). The 64-residue stretch at 378–441 folds into the TRAM domain; that stretch reads RAMLGSTQRI…PNSLRGRFIR (64 aa).

This sequence belongs to the methylthiotransferase family. MiaB subfamily. In terms of assembly, monomer. It depends on [4Fe-4S] cluster as a cofactor.

It localises to the cytoplasm. The enzyme catalyses N(6)-dimethylallyladenosine(37) in tRNA + (sulfur carrier)-SH + AH2 + 2 S-adenosyl-L-methionine = 2-methylsulfanyl-N(6)-dimethylallyladenosine(37) in tRNA + (sulfur carrier)-H + 5'-deoxyadenosine + L-methionine + A + S-adenosyl-L-homocysteine + 2 H(+). Catalyzes the methylthiolation of N6-(dimethylallyl)adenosine (i(6)A), leading to the formation of 2-methylthio-N6-(dimethylallyl)adenosine (ms(2)i(6)A) at position 37 in tRNAs that read codons beginning with uridine. The chain is tRNA-2-methylthio-N(6)-dimethylallyladenosine synthase from Aeromonas salmonicida (strain A449).